We begin with the raw amino-acid sequence, 74 residues long: Exodeoxyribonuclease 7 small subunit (74 aa).

This sequence belongs to the XseB family. Heterooligomer composed of large and small subunits.

The protein resides in the cytoplasm. It carries out the reaction Exonucleolytic cleavage in either 5'- to 3'- or 3'- to 5'-direction to yield nucleoside 5'-phosphates.. Bidirectionally degrades single-stranded DNA into large acid-insoluble oligonucleotides, which are then degraded further into small acid-soluble oligonucleotides. The chain is Exodeoxyribonuclease 7 small subunit from Clostridium botulinum (strain Eklund 17B / Type B).